The chain runs to 546 residues: CTP synthase (546 aa).

The tract at residues 1-266 (MTTRYIFVTG…DQLVTKRFGI (266 aa)) is amidoligase domain. CTP is bound at residue Ser-14. UTP is bound at residue Ser-14. ATP contacts are provided by residues 15–20 (SLGKGI) and Asp-72. The Mg(2+) site is built by Asp-72 and Glu-140. CTP contacts are provided by residues 147-149 (DIE), 187-192 (KTKPTQ), and Lys-223. UTP-binding positions include 187–192 (KTKPTQ) and Lys-223. 239–241 (KDV) is a binding site for ATP. Positions 291–542 (TIGMVGKYIE…VAAAAAYQKR (252 aa)) constitute a Glutamine amidotransferase type-1 domain. Residue Gly-352 coordinates L-glutamine. Residue Cys-379 is the Nucleophile; for glutamine hydrolysis of the active site. Residues 380-383 (LGMQ), Glu-403, and Arg-470 contribute to the L-glutamine site. Catalysis depends on residues His-515 and Glu-517.

This sequence belongs to the CTP synthase family. Homotetramer.

It carries out the reaction UTP + L-glutamine + ATP + H2O = CTP + L-glutamate + ADP + phosphate + 2 H(+). The catalysed reaction is L-glutamine + H2O = L-glutamate + NH4(+). The enzyme catalyses UTP + NH4(+) + ATP = CTP + ADP + phosphate + 2 H(+). The protein operates within pyrimidine metabolism; CTP biosynthesis via de novo pathway; CTP from UDP: step 2/2. Its activity is regulated as follows. Allosterically activated by GTP, when glutamine is the substrate; GTP has no effect on the reaction when ammonia is the substrate. The allosteric effector GTP functions by stabilizing the protein conformation that binds the tetrahedral intermediate(s) formed during glutamine hydrolysis. Inhibited by the product CTP, via allosteric rather than competitive inhibition. Catalyzes the ATP-dependent amination of UTP to CTP with either L-glutamine or ammonia as the source of nitrogen. Regulates intracellular CTP levels through interactions with the four ribonucleotide triphosphates. In Shewanella pealeana (strain ATCC 700345 / ANG-SQ1), this protein is CTP synthase.